We begin with the raw amino-acid sequence, 636 residues long: MSDWSIEDARSGYNVTHWSQGFYGIREDGEVTVSPNPQNPDHKVGLNELAKSMVEAGVSLPVLVRFPQILHHRVESLCEAFNDAIKKYDYQNDYLLVYPIKVNQQKTVVEEILASQKSKEVPQLGLEAGSKPELMAVLAMAQKASSVIVCNGYKDKEYIRLALIGEKLGHKVYIVLEKMSELKMVLIEAEKLGITPRLGLRVRLAFQGKGKWQASGGEKSKFGLSAAQVLKVIAELKSANMLDSLQLLHFHLGSQIANIRDIRQGVSEAGRFYCELRQLGASIDCFDVGGGLAVDYDGTRSQSNNSMNYGLNEYANNIVNVLTDLCNEYEQPMPRIISESGRHLTAHHAVLITDVIGTEAYQPENIQEPSEDAPQLLHNMWQSWLEISGRYDQRAIIEIYHDSQSDISEAHSLFAVGQLSLADRAWAEQANLRVCHEVKGLLSNNNRYHRPVIDELNEKLADKFFVNFSLFQSLPDAWGIDQVFPVLPLSGLDKAPERRAVMLDITCDSDGIVDQYVDGQGIETTLPVPAWSADSPYLIGFFMVGAYQEILGDMHNLFGDTNSAVVRIDERGLSQIESVLEGDTVADVLRYVNLDAVDFMRTYEELVNQHIVEEERASILEELQLGLKGYTYLEDF.

Lysine 101 is modified (N6-(pyridoxal phosphate)lysine). Position 286–296 (286–296 (FDVGGGLAVDY)) interacts with substrate.

It belongs to the Orn/Lys/Arg decarboxylase class-II family. SpeA subfamily. Mg(2+) is required as a cofactor. It depends on pyridoxal 5'-phosphate as a cofactor.

It carries out the reaction L-arginine + H(+) = agmatine + CO2. It participates in amine and polyamine biosynthesis; agmatine biosynthesis; agmatine from L-arginine: step 1/1. Its function is as follows. Catalyzes the biosynthesis of agmatine from arginine. This is Biosynthetic arginine decarboxylase from Shewanella frigidimarina (strain NCIMB 400).